The following is an 881-amino-acid chain: Leucine--tRNA ligase (881 aa).

Positions 48–58 (PYPSGKLHMGH) match the 'HIGH' region motif. Positions 638 to 642 (KMSKS) match the 'KMSKS' region motif. Lysine 641 lines the ATP pocket.

This sequence belongs to the class-I aminoacyl-tRNA synthetase family.

The protein localises to the cytoplasm. The enzyme catalyses tRNA(Leu) + L-leucine + ATP = L-leucyl-tRNA(Leu) + AMP + diphosphate. In Herminiimonas arsenicoxydans, this protein is Leucine--tRNA ligase.